A 96-amino-acid chain; its full sequence is uncharacterized protein (96 aa).

The HTH cro/C1-type domain occupies 38-91 (IEQLRKGTGLKIDDFARVLGVSVAMVKEWESRRVKPSSAELKLMRLIQANPALS). The H-T-H motif DNA-binding region spans 49-68 (IDDFARVLGVSVAMVKEWES).

This is an uncharacterized protein from Escherichia coli O157:H7.